The primary structure comprises 562 residues: Pyruvate kinase isozyme G, chloroplastic (562 aa).

R121 serves as a coordination point for substrate. Residues N123, S125, D156, and T157 each coordinate K(+). 123–126 serves as a coordination point for ATP; the sequence is NMSH. E308 contributes to the Mg(2+) binding site. Substrate-binding residues include G331, D332, and T364. D332 serves as a coordination point for Mg(2+).

It belongs to the pyruvate kinase family. As to quaternary structure, homotetramer. It depends on Mg(2+) as a cofactor. The cofactor is K(+). As to expression, highest levels in leaves. Also found in stems, roots and flowers.

It localises to the plastid. Its subcellular location is the chloroplast. It carries out the reaction pyruvate + ATP = phosphoenolpyruvate + ADP + H(+). It participates in carbohydrate degradation; glycolysis; pyruvate from D-glyceraldehyde 3-phosphate: step 5/5. This chain is Pyruvate kinase isozyme G, chloroplastic, found in Nicotiana tabacum (Common tobacco).